Consider the following 110-residue polypeptide: Large ribosomal subunit protein uL22 (110 aa).

The protein belongs to the universal ribosomal protein uL22 family. In terms of assembly, part of the 50S ribosomal subunit.

This protein binds specifically to 23S rRNA; its binding is stimulated by other ribosomal proteins, e.g. L4, L17, and L20. It is important during the early stages of 50S assembly. It makes multiple contacts with different domains of the 23S rRNA in the assembled 50S subunit and ribosome. Its function is as follows. The globular domain of the protein is located near the polypeptide exit tunnel on the outside of the subunit, while an extended beta-hairpin is found that lines the wall of the exit tunnel in the center of the 70S ribosome. The sequence is that of Large ribosomal subunit protein uL22 from Stutzerimonas stutzeri (strain A1501) (Pseudomonas stutzeri).